We begin with the raw amino-acid sequence, 320 residues long: Acetyl-coenzyme A carboxylase carboxyl transferase subunit alpha (320 aa).

The CoA carboxyltransferase C-terminal domain maps to 39–293; sequence ALDAKAAKLL…RGAIAAMLKE (255 aa).

This sequence belongs to the AccA family. Acetyl-CoA carboxylase is a heterohexamer composed of biotin carboxyl carrier protein (AccB), biotin carboxylase (AccC) and two subunits each of ACCase subunit alpha (AccA) and ACCase subunit beta (AccD).

The protein localises to the cytoplasm. It catalyses the reaction N(6)-carboxybiotinyl-L-lysyl-[protein] + acetyl-CoA = N(6)-biotinyl-L-lysyl-[protein] + malonyl-CoA. Its pathway is lipid metabolism; malonyl-CoA biosynthesis; malonyl-CoA from acetyl-CoA: step 1/1. Its function is as follows. Component of the acetyl coenzyme A carboxylase (ACC) complex. First, biotin carboxylase catalyzes the carboxylation of biotin on its carrier protein (BCCP) and then the CO(2) group is transferred by the carboxyltransferase to acetyl-CoA to form malonyl-CoA. In Ruegeria pomeroyi (strain ATCC 700808 / DSM 15171 / DSS-3) (Silicibacter pomeroyi), this protein is Acetyl-coenzyme A carboxylase carboxyl transferase subunit alpha.